An 89-amino-acid chain; its full sequence is Neuropeptide S (89 aa).

The signal sequence occupies residues 1–23 (MIGSLKFNFILFLLISTMHMFWC). The propeptide occupies 24 to 67 (HPISSSKVPGKSDYFVILLNSCPTRMDRRVGLDFLKPILEKTLM).

The protein localises to the secreted. In terms of biological role, modulates arousal and anxiety. May play an important anorexigenic role. Binds to its receptor NPSR1 with nanomolar affinity to increase intracellular calcium concentrations. In Bos taurus (Bovine), this protein is Neuropeptide S (NPS).